The following is a 976-amino-acid chain: Terminal uridylyltransferase 1 (976 aa).

Disordered stretches follow at residues 1 to 47 (MVSK…DADF) and 129 to 185 (TGRS…TTEG). A required for oligomerization and may contribute to the incorporation into the MPsome complex region spans residues 1–188 (MVSKYHRLLQ…EDDTTEGPRG (188 aa)). Positions 147–183 (ADDESDGNLDTDGSDASEGDEVESTTDADVYGEDDTT) are enriched in acidic residues. Residues 190-221 (VRLYSCDACPHAVFTTHAALLAHAEEHHADLL) form a C2H2-type; atypical zinc finger. Positions 195, 198, 212, and 217 each coordinate Zn(2+). Residues Ser-298 and 309–312 (ADID) contribute to the UTP site. Residues Asp-310 and Asp-312 each contribute to the Mg(2+) site. RNA is bound at residue Arg-358. A PAP-associated domain is found at 366-425 (ASSPILTVARRDAEDVVARSIRFILNGPATREDRLLLEGSVRDAVGPTGVQQVWWNRTSD). UTP-binding positions include 480–484 (GIRNS), Lys-505, Lys-509, and 523–524 (SY). The Nucleotide recognition motif (NRM) motif lies at 652 to 661 (IEDPYEENLN). An important for catalytic activity and RNA binding region spans residues 700-976 (DSSGTPAAGG…SKVTPFKSPR (277 aa)). The interval 732-755 (SESRRLPQSNSDNSGRIANGDNES) is disordered.

The protein belongs to the DNA polymerase type-B-like family. As to quaternary structure, oligomer. Component of the mitochondrial 3' processome (MPsome) complex composed at least of terminal uridylyltransferase KRET1/TUT1, 3'-5' exonuclease DSS1, MPSS1, MPSS2 and MPSS3. Within the complex, interacts with DSS1, MPSS1 and MPSS3. Requires Mg(2+) as cofactor. The cofactor is Mn(2+).

The protein resides in the mitochondrion. It carries out the reaction RNA(n) + UTP = RNA(n)-3'-uridine ribonucleotide + diphosphate. Terminal uridylyltransferase which is involved in the post-transcriptional editing of mitochondrial RNA, a process involving the addition and deletion of uridine (U) nucleotides in the pre-RNA. Specifically, catalyzes the addition of Us to the 3'-hydroxyl group of guided RNA (gRNA), ribosomal RNA (rRNA) and some mRNAs. As part of the mitochondrial 3' processome (MPsome), catalyzes the primary 3' uridylation of gRNA precursors to facilitate their recognition and to induce their processive 3'-5' degradation by DSS1, and the secondary 3' uridylation of mature gRNAs. Involved in the 3' uridylylation of the long A/U tail of some edited and never-edited mRNAs. Promotes 3' uridylylation-mediated decay of some never-edited mRNAs. Does not mediate RNA-independent UTP polymerization. This Trypanosoma brucei brucei protein is Terminal uridylyltransferase 1.